Here is a 174-residue protein sequence, read N- to C-terminus: ATP synthase subunit d, mitochondrial (174 aa).

Serine 2 carries the post-translational modification N-acetylserine.

This sequence belongs to the ATPase d subunit family.

Its subcellular location is the mitochondrion inner membrane. Mitochondrial membrane ATP synthase (F(1)F(0) ATP synthase or Complex V) produces ATP from ADP in the presence of a proton gradient across the membrane which is generated by electron transport complexes of the respiratory chain. F-type ATPases consist of two structural domains, F(1) - containing the extramembraneous catalytic core, and F(0) - containing the membrane proton channel, linked together by a central stalk and a peripheral stalk. During catalysis, ATP synthesis in the catalytic domain of F(1) is coupled via a rotary mechanism of the central stalk subunits to proton translocation. Part of the complex F(0) domain and the peripheric stalk, which acts as a stator to hold the catalytic alpha(3)beta(3) subcomplex and subunit a/ATP6 static relative to the rotary elements. This is ATP synthase subunit d, mitochondrial (ATP7) from Kluyveromyces lactis (strain ATCC 8585 / CBS 2359 / DSM 70799 / NBRC 1267 / NRRL Y-1140 / WM37) (Yeast).